Consider the following 96-residue polypeptide: Aspartyl/glutamyl-tRNA(Asn/Gln) amidotransferase subunit C (96 aa).

Belongs to the GatC family. As to quaternary structure, heterotrimer of A, B and C subunits.

The catalysed reaction is L-glutamyl-tRNA(Gln) + L-glutamine + ATP + H2O = L-glutaminyl-tRNA(Gln) + L-glutamate + ADP + phosphate + H(+). It carries out the reaction L-aspartyl-tRNA(Asn) + L-glutamine + ATP + H2O = L-asparaginyl-tRNA(Asn) + L-glutamate + ADP + phosphate + 2 H(+). Its function is as follows. Allows the formation of correctly charged Asn-tRNA(Asn) or Gln-tRNA(Gln) through the transamidation of misacylated Asp-tRNA(Asn) or Glu-tRNA(Gln) in organisms which lack either or both of asparaginyl-tRNA or glutaminyl-tRNA synthetases. The reaction takes place in the presence of glutamine and ATP through an activated phospho-Asp-tRNA(Asn) or phospho-Glu-tRNA(Gln). This Leptospira borgpetersenii serovar Hardjo-bovis (strain JB197) protein is Aspartyl/glutamyl-tRNA(Asn/Gln) amidotransferase subunit C.